A 631-amino-acid chain; its full sequence is Beta-galactosidase-1-like protein 3 (631 aa).

Catalysis depends on glutamate 203, which acts as the Proton donor. The active-site Nucleophile is the glutamate 277.

This sequence belongs to the glycosyl hydrolase 35 family.

This chain is Beta-galactosidase-1-like protein 3 (Glb1l3), found in Rattus norvegicus (Rat).